The sequence spans 448 residues: Thymidine phosphorylase (448 aa).

The protein belongs to the thymidine/pyrimidine-nucleoside phosphorylase family. As to quaternary structure, homodimer.

It carries out the reaction thymidine + phosphate = 2-deoxy-alpha-D-ribose 1-phosphate + thymine. The protein operates within pyrimidine metabolism; dTMP biosynthesis via salvage pathway; dTMP from thymine: step 1/2. The enzymes which catalyze the reversible phosphorolysis of pyrimidine nucleosides are involved in the degradation of these compounds and in their utilization as carbon and energy sources, or in the rescue of pyrimidine bases for nucleotide synthesis. The chain is Thymidine phosphorylase from Vibrio cholerae serotype O1 (strain ATCC 39315 / El Tor Inaba N16961).